The sequence spans 276 residues: Diaminopimelate epimerase (276 aa).

Asn-13, Gln-46, and Asn-66 together coordinate substrate. Catalysis depends on Cys-75, which acts as the Proton donor. Substrate contacts are provided by residues 76-77 (GN), Asn-159, Asn-192, and 210-211 (ER). Cys-219 acts as the Proton acceptor in catalysis. Position 220-221 (220-221 (GT)) interacts with substrate.

This sequence belongs to the diaminopimelate epimerase family. In terms of assembly, homodimer.

It localises to the cytoplasm. It carries out the reaction (2S,6S)-2,6-diaminopimelate = meso-2,6-diaminopimelate. It participates in amino-acid biosynthesis; L-lysine biosynthesis via DAP pathway; DL-2,6-diaminopimelate from LL-2,6-diaminopimelate: step 1/1. Catalyzes the stereoinversion of LL-2,6-diaminopimelate (L,L-DAP) to meso-diaminopimelate (meso-DAP), a precursor of L-lysine and an essential component of the bacterial peptidoglycan. The protein is Diaminopimelate epimerase of Stutzerimonas stutzeri (strain A1501) (Pseudomonas stutzeri).